The primary structure comprises 109 residues: Small ribosomal subunit protein uS15c (109 aa).

It belongs to the universal ribosomal protein uS15 family. Part of the 30S ribosomal subunit.

The protein localises to the plastid. Its subcellular location is the chloroplast. The protein is Small ribosomal subunit protein uS15c (rps15-A) of Trachelium caeruleum (Blue throatwort).